We begin with the raw amino-acid sequence, 130 residues long: Small ribosomal subunit protein uS9 (130 aa).

The protein belongs to the universal ribosomal protein uS9 family.

This chain is Small ribosomal subunit protein uS9, found in Streptococcus equi subsp. zooepidemicus (strain H70).